The chain runs to 198 residues: ATP synthase subunit b (198 aa).

Residues 25–45 (PLSELLIGTLAFGLLVAFFFW) traverse the membrane as a helical segment.

Belongs to the ATPase B chain family. In terms of assembly, F-type ATPases have 2 components, F(1) - the catalytic core - and F(0) - the membrane proton channel. F(1) has five subunits: alpha(3), beta(3), gamma(1), delta(1), epsilon(1). F(0) has three main subunits: a(1), b(2) and c(10-14). The alpha and beta chains form an alternating ring which encloses part of the gamma chain. F(1) is attached to F(0) by a central stalk formed by the gamma and epsilon chains, while a peripheral stalk is formed by the delta and b chains.

It is found in the cell membrane. Functionally, f(1)F(0) ATP synthase produces ATP from ADP in the presence of a proton or sodium gradient. F-type ATPases consist of two structural domains, F(1) containing the extramembraneous catalytic core and F(0) containing the membrane proton channel, linked together by a central stalk and a peripheral stalk. During catalysis, ATP synthesis in the catalytic domain of F(1) is coupled via a rotary mechanism of the central stalk subunits to proton translocation. Component of the F(0) channel, it forms part of the peripheral stalk, linking F(1) to F(0). This Frankia alni (strain DSM 45986 / CECT 9034 / ACN14a) protein is ATP synthase subunit b.